The chain runs to 276 residues: NADPH-dependent 7-cyano-7-deazaguanine reductase (276 aa).

Residue 83–85 (IES) coordinates substrate. Residue 85–86 (SK) participates in NADPH binding. Catalysis depends on Cys-184, which acts as the Thioimide intermediate. Asp-191 acts as the Proton donor in catalysis. 223 to 224 (HE) contributes to the substrate binding site. 252 to 253 (RG) contacts NADPH.

This sequence belongs to the GTP cyclohydrolase I family. QueF type 2 subfamily. Homodimer.

It localises to the cytoplasm. It catalyses the reaction 7-aminomethyl-7-carbaguanine + 2 NADP(+) = 7-cyano-7-deazaguanine + 2 NADPH + 3 H(+). The protein operates within tRNA modification; tRNA-queuosine biosynthesis. Its function is as follows. Catalyzes the NADPH-dependent reduction of 7-cyano-7-deazaguanine (preQ0) to 7-aminomethyl-7-deazaguanine (preQ1). The polypeptide is NADPH-dependent 7-cyano-7-deazaguanine reductase (Pseudomonas putida (strain W619)).